A 106-amino-acid polypeptide reads, in one-letter code: UPF0473 protein LCABL_08490 (106 aa).

Belongs to the UPF0473 family.

In Lacticaseibacillus casei (strain BL23) (Lactobacillus casei), this protein is UPF0473 protein LCABL_08490.